Reading from the N-terminus, the 297-residue chain is Probable esterase afoC (297 aa).

Ser-136 (charge relay system) is an active-site residue. The span at 204–217 shows a compositional bias: low complexity; sequence ASSSASASVSGSES. The segment at 204–226 is disordered; sequence ASSSASASVSGSESAGEEEEDGH. Active-site charge relay system residues include Asp-240 and His-267.

The protein belongs to the LovG family.

Probable esterase; part of the gene cluster that mediates the biosynthesis of asperfuranone, a probable antitumor agent. The polyketide synthase afoG is responsible for producing the 3,5-dimethyloctadienone moiety from acetyl-CoA, three malonyl-CoA, and two S-adenosyl methionines (SAM). The 3,5-dimethyloctadienone moiety is then loaded onto the SAT domain of afoE and extended with four malonyl-CoA and one SAM, which leads to the formation of 2,4-dihydroxy-6-(5,7-dimethyl-2-oxo-trans-3-trans-5-nonadienyl)-3-methylbenzaldehyde (compound 2) after reductive release and aldol condensation. AfoD is the next enzyme in the biosynthesis sequence and hydroxylates the side chain at the benzylic position of compound 2. After benzylic hydroxylation, a furan ring is formed after five-member ring hemiacetal formation and water elimination. AfoF and afoC are proposed to oxidize the R-diketone proton and to reduce the unconjugated carbonyl group, respectively, to generate asperfuranone. Since no intermediates could be isolated from afoF and afoC deletants, the sequence of these two enzymes is not fully understood. Moreover, since afoC deletant still produces a small amount of asperfuranone, other endogenous oxidoreductases might catalyze the same reaction with much less efficiency. This chain is Probable esterase afoC, found in Emericella nidulans (strain FGSC A4 / ATCC 38163 / CBS 112.46 / NRRL 194 / M139) (Aspergillus nidulans).